Here is a 92-residue protein sequence, read N- to C-terminus: Small archaeal modifier protein 3 (92 aa).

Residues lysine 18, lysine 55, and lysine 62 each participate in a glycyl lysine isopeptide (Lys-Gly) (interchain with G-Cter in SAMP3) cross-link. Glycine 92 bears the Glycyl adenylate; alternate mark. Glycine 92 participates in a covalent cross-link: Glycyl lysine isopeptide (Gly-Lys) (interchain with K-? in acceptor proteins); alternate.

As to quaternary structure, monomer. Post-translationally, the C-terminal glycine is likely acyl-adenylated (-COAMP) by UbaA.

Its function is as follows. Functions as a protein modifier covalently attached to lysine residues of substrate proteins. The protein modification process is termed sampylation and involves the formation of an isopeptide bond between the SAMP3 C-terminal glycine carboxylate and the epsilon-amino group of lysine residues on target proteins. Seems to be able to form polymeric chains with itself at Lys-18, Lys-55 and Lys-62, similar to ubiquitin and other ubiquitin-like proteins. SAMP3 appears not to serve as a proteolytic signal in the cell to target proteins for degradation by proteasomes. May regulate molybdenum cofactor (MoCo) biosynthesis by inhibiting the activity of MPT synthase MoaE under aerobic conditions, providing a hierarchy of oxygen use prior to that of alternative electron acceptors such as DMSO. This is Small archaeal modifier protein 3 (samp3) from Haloferax volcanii (strain ATCC 29605 / DSM 3757 / JCM 8879 / NBRC 14742 / NCIMB 2012 / VKM B-1768 / DS2) (Halobacterium volcanii).